Consider the following 503-residue polypeptide: Arginyl-tRNA--protein transferase 1 (503 aa).

This sequence belongs to the R-transferase family.

The protein resides in the cytoplasm. It carries out the reaction an N-terminal L-alpha-aminoacyl-[protein] + L-arginyl-tRNA(Arg) = an N-terminal L-arginyl-L-aminoacyl-[protein] + tRNA(Arg) + H(+). In terms of biological role, involved in the post-translational conjugation of arginine to the N-terminal aspartate or glutamate of a protein. This arginylation is required for degradation of the protein via the ubiquitin pathway. Does not arginylate cysteine residues. This is Arginyl-tRNA--protein transferase 1 (ATE1) from Saccharomyces cerevisiae (strain ATCC 204508 / S288c) (Baker's yeast).